The chain runs to 358 residues: Uroporphyrinogen decarboxylase (358 aa).

Substrate contacts are provided by residues 29–33, F48, D79, Y155, S210, and H330; that span reads RQAGR.

This sequence belongs to the uroporphyrinogen decarboxylase family. As to quaternary structure, homodimer.

The protein resides in the cytoplasm. It carries out the reaction uroporphyrinogen III + 4 H(+) = coproporphyrinogen III + 4 CO2. It participates in porphyrin-containing compound metabolism; protoporphyrin-IX biosynthesis; coproporphyrinogen-III from 5-aminolevulinate: step 4/4. Functionally, catalyzes the decarboxylation of four acetate groups of uroporphyrinogen-III to yield coproporphyrinogen-III. The sequence is that of Uroporphyrinogen decarboxylase from Bordetella parapertussis (strain 12822 / ATCC BAA-587 / NCTC 13253).